Here is a 421-residue protein sequence, read N- to C-terminus: Replication factor C large subunit (421 aa).

Residue 63–70 (GPPGIGKT) participates in ATP binding.

The protein belongs to the activator 1 small subunits family. RfcL subfamily. Heteromultimer composed of small subunits (RfcS) and large subunits (RfcL).

Part of the RFC clamp loader complex which loads the PCNA sliding clamp onto DNA. The protein is Replication factor C large subunit of Pyrobaculum calidifontis (strain DSM 21063 / JCM 11548 / VA1).